The following is a 100-amino-acid chain: NADH-quinone oxidoreductase subunit K 2 (100 aa).

3 helical membrane passes run 4–24 (LHSY…GVLI), 29–49 (IVIF…FIAL), and 60–80 (IFVF…LALM).

Belongs to the complex I subunit 4L family. NDH-1 is composed of 14 different subunits. Subunits NuoA, H, J, K, L, M, N constitute the membrane sector of the complex.

It is found in the cell inner membrane. The enzyme catalyses a quinone + NADH + 5 H(+)(in) = a quinol + NAD(+) + 4 H(+)(out). Its function is as follows. NDH-1 shuttles electrons from NADH, via FMN and iron-sulfur (Fe-S) centers, to quinones in the respiratory chain. The immediate electron acceptor for the enzyme in this species is believed to be ubiquinone. Couples the redox reaction to proton translocation (for every two electrons transferred, four hydrogen ions are translocated across the cytoplasmic membrane), and thus conserves the redox energy in a proton gradient. In Geobacter metallireducens (strain ATCC 53774 / DSM 7210 / GS-15), this protein is NADH-quinone oxidoreductase subunit K 2.